The chain runs to 125 residues: CLAVATA3/ESR (CLE)-related protein ESR3 (125 aa).

An N-terminal signal peptide occupies residues 1 to 26 (MASRMGMVAIMSLFVYAIVVPTSVNA). A disordered region spans residues 45-125 (QQQGGFIGHR…IGPPPLPDRY (81 aa)). Hydroxyproline occurs at positions 75 and 78. P78 is a glycosylation site (O-linked (Ara...) hydroxyproline).

This sequence belongs to the CLV3/ESR signal peptide family. In terms of processing, the O-glycosylation (arabinosylation) of the hydroxyproline Pro-78 enhances binding affinity of the ESR3p peptide for its receptor. As to expression, seed endosperm.

It is found in the secreted. Its subcellular location is the extracellular space. Functionally, extracellular signal peptide that regulates cell fate. The polypeptide is CLAVATA3/ESR (CLE)-related protein ESR3 (Zea mays (Maize)).